The primary structure comprises 352 residues: Tropomodulin-3 (352 aa).

Ser-25 is modified (phosphoserine).

The protein belongs to the tropomodulin family. As to quaternary structure, binds to the N-terminus of tropomyosin and to actin. Interacts with FLII. As to expression, ubiquitous.

It localises to the cytoplasm. The protein localises to the cytoskeleton. In terms of biological role, blocks the elongation and depolymerization of the actin filaments at the pointed end. The Tmod/TM complex contributes to the formation of the short actin protofilament, which in turn defines the geometry of the membrane skeleton. The polypeptide is Tropomodulin-3 (Tmod3) (Mus musculus (Mouse)).